Here is a 212-residue protein sequence, read N- to C-terminus: Probable GTP-binding protein EngB (212 aa).

Residues S38–P210 form the EngB-type G domain. GTP is bound by residues G46–S53, G73–Q77, D91–G94, T158–D161, and V189–N191. Residues S53 and T75 each contribute to the Mg(2+) site.

The protein belongs to the TRAFAC class TrmE-Era-EngA-EngB-Septin-like GTPase superfamily. EngB GTPase family. Requires Mg(2+) as cofactor.

In terms of biological role, necessary for normal cell division and for the maintenance of normal septation. This is Probable GTP-binding protein EngB from Rickettsia conorii (strain ATCC VR-613 / Malish 7).